Reading from the N-terminus, the 138-residue chain is ATP synthase epsilon chain 1 (138 aa).

Belongs to the ATPase epsilon chain family. As to quaternary structure, F-type ATPases have 2 components, CF(1) - the catalytic core - and CF(0) - the membrane proton channel. CF(1) has five subunits: alpha(3), beta(3), gamma(1), delta(1), epsilon(1). CF(0) has three main subunits: a, b and c.

It localises to the cell inner membrane. In terms of biological role, produces ATP from ADP in the presence of a proton gradient across the membrane. This is ATP synthase epsilon chain 1 from Syntrophotalea carbinolica (strain DSM 2380 / NBRC 103641 / GraBd1) (Pelobacter carbinolicus).